A 60-amino-acid polypeptide reads, in one-letter code: Large ribosomal subunit protein bL32c (60 aa).

Belongs to the bacterial ribosomal protein bL32 family.

It localises to the plastid. The protein resides in the chloroplast. The sequence is that of Large ribosomal subunit protein bL32c from Psilotum nudum (Whisk fern).